The chain runs to 66 residues: Light-harvesting protein B-800-850 alpha chain B (66 aa).

Residues 1 to 11 (MNQGRIWTVVN) lie on the Cytoplasmic side of the membrane. A helical transmembrane segment spans residues 12 to 35 (PGVGLPLLLGSVTVIAILVHYAVL). A bacteriochlorophyll is bound at residue His-31. Topologically, residues 36 to 66 (SNTTWFPKYWNGATVAAPAAAPAPAAPAAKK) are periplasmic.

The protein belongs to the antenna complex alpha subunit family. In terms of assembly, the core complex is formed by different alpha and beta chains, binding bacteriochlorophyll molecules, and arranged most probably in tetrameric structures disposed around the reaction center. The non-pigmented gamma chains may constitute additional components.

Its subcellular location is the cell inner membrane. Functionally, antenna complexes are light-harvesting systems, which transfer the excitation energy to the reaction centers. This chain is Light-harvesting protein B-800-850 alpha chain B (pucAB), found in Rhodopseudomonas palustris (strain ATCC BAA-98 / CGA009).